The chain runs to 258 residues: UPF0246 protein YaaA (258 aa).

Belongs to the UPF0246 family.

In Shigella flexneri serotype 5b (strain 8401), this protein is UPF0246 protein YaaA.